The primary structure comprises 376 residues: MTSDPVNTNISSPTLTDRNADESWELLKREFNTLFSNLKTDSKEEGNFTDNKGVIAKKPIVLQDNDDSDFTQNQGKVATATSTTSDRSFKRTLGSIEMKKRYVKKNCQAKFVFNTLEGKEVCSKILQHTLGLLSLLLLTRKIRLLNFSSKLRLVIQQLSLFRYYLRFGNFAINLYKIIKRFRWLREMKKLHYKDQSILFYFKNFRFFDIIEAFYNLTDELILFHKLQSMFGKKNTSHANTNRLMTFVKEQHYILWEVLNILAINKNIEQWRQLIRDEIYLSIYNTSGNAIKEYELKYKLPTNDKVNLELRKNNITLDFYKIILNLLSNLINIKGKRDKYNSELAYEIISVGSGVTELLKLWNRAKVTSANEHTSAV.

Homooligomer. Interacts with PEX25 and PEX34.

It localises to the peroxisome membrane. Its function is as follows. Required for regulation of peroxisome size and number. Also promotes peroxisome division and biogenesis. The sequence is that of Peroxisomal membrane protein PEX27 (PEX27) from Saccharomyces cerevisiae (strain ATCC 204508 / S288c) (Baker's yeast).